We begin with the raw amino-acid sequence, 157 residues long: Ribosome-binding factor A (157 aa).

The interval S124–E157 is disordered. Basic and acidic residues predominate over residues T147 to E157.

It belongs to the RbfA family. Monomer. Binds 30S ribosomal subunits, but not 50S ribosomal subunits or 70S ribosomes.

Its subcellular location is the cytoplasm. Functionally, one of several proteins that assist in the late maturation steps of the functional core of the 30S ribosomal subunit. Associates with free 30S ribosomal subunits (but not with 30S subunits that are part of 70S ribosomes or polysomes). Required for efficient processing of 16S rRNA. May interact with the 5'-terminal helix region of 16S rRNA. The sequence is that of Ribosome-binding factor A from Streptomyces avermitilis (strain ATCC 31267 / DSM 46492 / JCM 5070 / NBRC 14893 / NCIMB 12804 / NRRL 8165 / MA-4680).